A 468-amino-acid chain; its full sequence is Effector protein hopD2 (468 aa).

The segment covering 1–20 has biased composition (polar residues); sequence MNPLQPIQHSITNSQMSGGQ. The segment at 1–35 is disordered; that stretch reads MNPLQPIQHSITNSQMSGGQQLEAEGSQAHNSYSH. The region spanning 143–468 is the Tyrosine-protein phosphatase domain; that stretch reads DASSPPSAND…TQWRAKIALE (326 aa). Catalysis depends on Cys-378, which acts as the Phosphocysteine intermediate.

In terms of assembly, interacts with EFR and FLS2 (via the kinase and cytoplasmic domains).

It localises to the secreted. It catalyses the reaction O-phospho-L-tyrosyl-[protein] + H2O = L-tyrosyl-[protein] + phosphate. Its activity is regulated as follows. Inhibited by sodium orthovanadate. Effector showing tyrosine-phosphatase activity required for host defense suppression. Functions inside plant cells causing suppression of HR (hypersensitive response), PR1 gene expression and oxidative burst probably by interfering with a MAPK (mitogen-activated protein kinase) pathway. MAPK cascades are known to activate defense-related transcription factors. Inhibits plant pattern-recognition receptors (PRRs) activation. The polypeptide is Effector protein hopD2 (hopD2) (Pseudomonas syringae pv. tomato (strain ATCC BAA-871 / DC3000)).